A 103-amino-acid polypeptide reads, in one-letter code: Large ribosomal subunit protein bL21 (103 aa).

The protein belongs to the bacterial ribosomal protein bL21 family. As to quaternary structure, part of the 50S ribosomal subunit. Contacts protein L20.

In terms of biological role, this protein binds to 23S rRNA in the presence of protein L20. The polypeptide is Large ribosomal subunit protein bL21 (Acidovorax sp. (strain JS42)).